Here is an 86-residue protein sequence, read N- to C-terminus: Large ribosomal subunit protein bL31B (86 aa).

Belongs to the bacterial ribosomal protein bL31 family. Type B subfamily. In terms of assembly, part of the 50S ribosomal subunit.

This is Large ribosomal subunit protein bL31B from Cupriavidus necator (strain ATCC 17699 / DSM 428 / KCTC 22496 / NCIMB 10442 / H16 / Stanier 337) (Ralstonia eutropha).